Here is a 189-residue protein sequence, read N- to C-terminus: Parkinson disease protein 7 homolog (189 aa).

Residues Cys46 and Cys53 are each lipidated (S-palmitoyl cysteine). Tyr67 is subject to Phosphotyrosine. The S-palmitoyl cysteine moiety is linked to residue Cys106. Cys106 acts as the Nucleophile in catalysis. Residue Cys106 is modified to Cysteine sulfinic acid (-SO2H). At Cys106 the chain carries Cysteine sulfinic acid (-SO2H); alternate. Cys106 carries the S-palmitoyl cysteine; alternate lipid modification. Residue His126 is part of the active site. Lys130 is covalently cross-linked (Glycyl lysine isopeptide (Lys-Gly) (interchain with G-Cter in SUMO)). Position 148 is an N6-acetyllysine (Lys148). Lys182 is modified (N6-succinyllysine).

The protein belongs to the peptidase C56 family. As to quaternary structure, homodimer. Deglycase activity does not require glutathione as a cofactor, however, glycated glutathione constitutes a PARK7 substrate. serves as cofactor. In terms of processing, sumoylated on Lys-130 by pias2 or pias4; which is essential for cell-growth promoting activity and transforming activity. Undergoes cleavage of a C-terminal peptide and subsequent activation of protease activity in response to oxidative stress. As to expression, larval brain and gut from 96 hours post-fertilization (hpf). Ubiquitous in adult; most abundant in brain, eye, heart and muscle. Within brain, neuronal expression is widespread, particularly in the cerebellum, medullary reticular formation and diencephalon. Expressed in major forebrain and diencephalic dopaminergic cell groups.

It is found in the cell membrane. The protein resides in the cytoplasm. Its subcellular location is the nucleus. It localises to the membrane raft. The protein localises to the mitochondrion. It is found in the endoplasmic reticulum. The enzyme catalyses N(omega)-(1-hydroxy-2-oxopropyl)-L-arginyl-[protein] + H2O = lactate + L-arginyl-[protein] + H(+). The catalysed reaction is N(6)-(1-hydroxy-2-oxopropyl)-L-lysyl-[protein] + H2O = lactate + L-lysyl-[protein] + H(+). It catalyses the reaction S-(1-hydroxy-2-oxopropyl)-L-cysteinyl-[protein] + H2O = lactate + L-cysteinyl-[protein] + H(+). It carries out the reaction N(omega)-(1-hydroxy-2-oxoethyl)-L-arginyl-[protein] + H2O = L-arginyl-[protein] + glycolate + H(+). The enzyme catalyses N(6)-(1-hydroxy-2-oxoethyl)-L-lysyl-[protein] + H2O = glycolate + L-lysyl-[protein] + H(+). The catalysed reaction is S-(1-hydroxy-2-oxoethyl)-L-cysteinyl-[protein] + H2O = glycolate + L-cysteinyl-[protein] + H(+). It catalyses the reaction N(2)-(1-hydroxy-2-oxopropyl)-dGTP + H2O = lactate + dGTP + H(+). It carries out the reaction N(2)-(1-hydroxy-2-oxopropyl)-GTP + H2O = lactate + GTP + H(+). The enzyme catalyses N(2)-(1-hydroxy-2-oxopropyl)-GDP + H2O = lactate + GDP + H(+). The catalysed reaction is N(2)-(1-hydroxy-2-oxopropyl)-GMP + H2O = lactate + GMP + H(+). It catalyses the reaction N(2)-(1-hydroxy-2-oxoethyl)-dGTP + H2O = dGTP + glycolate + H(+). It carries out the reaction N(2)-(1-hydroxy-2-oxoethyl)-GTP + H2O = glycolate + GTP + H(+). The enzyme catalyses N(2)-(1-hydroxy-2-oxoethyl)-GDP + H2O = glycolate + GDP + H(+). The catalysed reaction is N(2)-(1-hydroxy-2-oxoethyl)-GMP + H2O = glycolate + GMP + H(+). It catalyses the reaction an N(2)-(1-hydroxy-2-oxopropyl)-guanosine in RNA + H2O = a guanosine in RNA + lactate + H(+). It carries out the reaction an N(2)-(1-hydroxy-2-oxopropyl)-2'-deoxyguanosine in DNA + H2O = a 2'-deoxyguanosine in DNA + lactate + H(+). The enzyme catalyses an N(2)-(1-hydroxy-2-oxoethyl)-guanosine in RNA + H2O = a guanosine in RNA + glycolate + H(+). The catalysed reaction is an N(2)-(1-hydroxy-2-oxoethyl)-2'-deoxyguanosine in DNA + H2O = a 2'-deoxyguanosine in DNA + glycolate + H(+). Its function is as follows. Multifunctional protein with controversial molecular function which plays an important role in cell protection against oxidative stress and cell death acting as oxidative stress sensor and redox-sensitive chaperone and protease. It is involved in neuroprotective mechanisms like the stabilization of NFE2L2 and PINK1 proteins, male fertility as a positive regulator of androgen signaling pathway as well as cell growth and transformation through, for instance, the modulation of NF-kappa-B signaling pathway. Has been described as a protein and nucleotide deglycase that catalyzes the deglycation of the Maillard adducts formed between amino groups of proteins or nucleotides and reactive carbonyl groups of glyoxals. But this function is rebuted by other works. As a protein deglycase, repairs methylglyoxal- and glyoxal-glycated proteins, and releases repaired proteins and lactate or glycolate, respectively. Deglycates cysteine, arginine and lysine residues in proteins, and thus reactivates these proteins by reversing glycation by glyoxals. Acts on early glycation intermediates (hemithioacetals and aminocarbinols), preventing the formation of advanced glycation endproducts (AGE) that cause irreversible damage. Also functions as a nucleotide deglycase able to repair glycated guanine in the free nucleotide pool (GTP, GDP, GMP, dGTP) and in DNA and RNA. Is thus involved in a major nucleotide repair system named guanine glycation repair (GG repair), dedicated to reversing methylglyoxal and glyoxal damage via nucleotide sanitization and direct nucleic acid repair. Protects histones from adduction by methylglyoxal, controls the levels of methylglyoxal-derived argininine modifications on chromatin. Displays a very low glyoxalase activity that may reflect its deglycase activity. It is involved in neuroprotective mechanisms as well as cell growth and transformation. Its involvement in protein repair could also explain other unrelated functions. Eliminates hydrogen peroxide and protects cells against hydrogen peroxide-induced cell death. Required for correct mitochondrial morphology and function as well as for autophagy of dysfunctional mitochondria. Regulates astrocyte inflammatory responses, may modulate lipid rafts-dependent endocytosis in astrocytes and neuronal cells. Binds to a number of mRNAs containing multiple copies of GG or CC motifs and partially inhibits their translation but dissociates following oxidative stress. Metal-binding protein able to bind copper as well as toxic mercury ions, enhances the cell protection mechanism against induced metal toxicity. The sequence is that of Parkinson disease protein 7 homolog from Danio rerio (Zebrafish).